Reading from the N-terminus, the 27-residue chain is Allergen C-C (27 aa).

This sequence belongs to the protease inhibitor I6 (cereal trypsin/alpha-amylase inhibitor) family.

It is found in the secreted. This is Allergen C-C from Triticum aestivum (Wheat).